Here is a 327-residue protein sequence, read N- to C-terminus: Interleukin-12 subunit beta (327 aa).

Positions 1 to 22 (MHPQQLVVSWFSLVLLTSPIVA) are cleaved as a signal peptide. The Ig-like C2-type domain occupies 23-106 (IWELEKNVYV…LSRSLLLLHK (84 aa)). The cysteines at positions 50 and 90 are disulfide-linked. An N-linked (GlcNAc...) asparagine glycan is attached at asparagine 223. One can recognise a Fibronectin type-III domain in the interval 238 to 327 (PPKNLQLRPL…WSEWASVSCS (90 aa)).

This sequence belongs to the IL-12B family. In terms of assembly, heterodimer with IL12A; disulfide-linked. The heterodimer is known as interleukin IL-12. Heterodimer with IL23A; disulfide-linked. The heterodimer is known as interleukin IL-23. Also secreted as a monomer. Interacts with NBR1; this interaction promotes IL-12 secretion.

The protein localises to the secreted. Its function is as follows. Cytokine that can act as a growth factor for activated T and NK cells, enhance the lytic activity of NK/lymphokine-activated killer cells, and stimulate the production of IFN-gamma by resting PBMC. In terms of biological role, associates with IL23A to form the IL-23 interleukin, a heterodimeric cytokine which functions in innate and adaptive immunity. IL-23 may constitute with IL-17 an acute response to infection in peripheral tissues. IL-23 binds to a heterodimeric receptor complex composed of IL12RB1 and IL23R, activates the Jak-Stat signaling cascade, stimulates memory rather than naive T-cells and promotes production of pro-inflammatory cytokines. IL-23 induces autoimmune inflammation and thus may be responsible for autoimmune inflammatory diseases and may be important for tumorigenesis. In Cervus elaphus (Red deer), this protein is Interleukin-12 subunit beta (IL12B).